The sequence spans 257 residues: uncharacterized protein (257 aa).

This is an uncharacterized protein from Acidianus bottle-shaped virus (isolate Italy/Pozzuoli) (ABV).